Reading from the N-terminus, the 444-residue chain is GTPase Der (444 aa).

EngA-type G domains follow at residues 2 to 167 (LKVA…LKEI) and 173 to 349 (FKFC…ENLN). Residues 8–15 (GKPNVGKS), 55–59 (DTGGL), 118–121 (NKSE), 179–186 (GRPNVGKS), 226–230 (DTAGI), and 291–294 (NKWD) contribute to the GTP site. The 85-residue stretch at 350–434 (LKFNSKILTD…PITLYFKNKT (85 aa)) folds into the KH-like domain.

The protein belongs to the TRAFAC class TrmE-Era-EngA-EngB-Septin-like GTPase superfamily. EngA (Der) GTPase family. In terms of assembly, associates with the 50S ribosomal subunit.

Its function is as follows. GTPase that plays an essential role in the late steps of ribosome biogenesis. The sequence is that of GTPase Der from Malacoplasma penetrans (strain HF-2) (Mycoplasma penetrans).